The primary structure comprises 569 residues: Urease subunit alpha (569 aa).

A Urease domain is found at Gly131–Leu569. Residues His136, His138, and Lys219 each contribute to the Ni(2+) site. Lys219 carries the post-translational modification N6-carboxylysine. His221 is a substrate binding site. 2 residues coordinate Ni(2+): His248 and His274. The Proton donor role is filled by His322. Asp362 is a binding site for Ni(2+).

The protein belongs to the metallo-dependent hydrolases superfamily. Urease alpha subunit family. In terms of assembly, heterotrimer of UreA (gamma), UreB (beta) and UreC (alpha) subunits. Three heterotrimers associate to form the active enzyme. The cofactor is Ni cation. Carboxylation allows a single lysine to coordinate two nickel ions.

The protein resides in the cytoplasm. The catalysed reaction is urea + 2 H2O + H(+) = hydrogencarbonate + 2 NH4(+). It functions in the pathway nitrogen metabolism; urea degradation; CO(2) and NH(3) from urea (urease route): step 1/1. This chain is Urease subunit alpha, found in Prochlorococcus marinus (strain MIT 9215).